Here is a 380-residue protein sequence, read N- to C-terminus: Carbamoyl phosphate synthase small chain (380 aa).

Positions 1 to 187 are CPSase; sequence MTTSTRGAAK…VVPAIGAKRF (187 aa). Residues Ser55, Gly236, and Gly238 each contribute to the L-glutamine site. The Glutamine amidotransferase type-1 domain maps to 188 to 380; the sequence is TVAAVDLGIK…FVSLMEGQRA (193 aa). Cys264 (nucleophile) is an active-site residue. The L-glutamine site is built by Phe265, Gln268, Asn306, Gly308, and Phe309. Catalysis depends on residues His354 and Glu356.

The protein belongs to the CarA family. As to quaternary structure, composed of two chains; the small (or glutamine) chain promotes the hydrolysis of glutamine to ammonia, which is used by the large (or ammonia) chain to synthesize carbamoyl phosphate. Tetramer of heterodimers (alpha,beta)4.

The catalysed reaction is hydrogencarbonate + L-glutamine + 2 ATP + H2O = carbamoyl phosphate + L-glutamate + 2 ADP + phosphate + 2 H(+). It catalyses the reaction L-glutamine + H2O = L-glutamate + NH4(+). The protein operates within amino-acid biosynthesis; L-arginine biosynthesis; carbamoyl phosphate from bicarbonate: step 1/1. Its pathway is pyrimidine metabolism; UMP biosynthesis via de novo pathway; (S)-dihydroorotate from bicarbonate: step 1/3. Small subunit of the glutamine-dependent carbamoyl phosphate synthetase (CPSase). CPSase catalyzes the formation of carbamoyl phosphate from the ammonia moiety of glutamine, carbonate, and phosphate donated by ATP, constituting the first step of 2 biosynthetic pathways, one leading to arginine and/or urea and the other to pyrimidine nucleotides. The small subunit (glutamine amidotransferase) binds and cleaves glutamine to supply the large subunit with the substrate ammonia. In Streptomyces avermitilis (strain ATCC 31267 / DSM 46492 / JCM 5070 / NBRC 14893 / NCIMB 12804 / NRRL 8165 / MA-4680), this protein is Carbamoyl phosphate synthase small chain.